We begin with the raw amino-acid sequence, 314 residues long: MIIVTGGAGMIGSNIIKALNERGITDILVVDHLKNGRKFKNLVDLQIADYMDRDDFLAQIMAGDDFGFIDAIFHEGACSATTEWDGKYVMLNNYEYSKELLHYCLDREIPFLYASSAATYGETDTFIEEPQYEGALNVYGYSKQQFDNYVRRLWLDAKQHDETLSQITGFRYFNVYGPREQHKGSMASVAFHLNNQMNAGENPKLFAGSENFKRDFVYVGDVAAVNLWFLDHGVSGIFNCGTGKAESFNEVAKAVIAFHGRGEVETIPFPDHLKGAYQEFTEADLTKLRAAGCDVQFKSVAEGVAEYMALINRK.

Residues 10 to 11 (MI), 31 to 32 (DH), lysine 38, arginine 53, 75 to 79 (EGACS), and asparagine 92 each bind NADP(+). The active-site Proton acceptor is the tyrosine 139. Residue lysine 143 coordinates NADP(+). Asparagine 174 serves as a coordination point for substrate. NADP(+)-binding residues include valine 175 and lysine 183. The active-site Proton acceptor is lysine 183. Residues serine 185, histidine 192, 206 to 209 (FAGS), arginine 214, and tyrosine 277 contribute to the substrate site.

This sequence belongs to the NAD(P)-dependent epimerase/dehydratase family. HldD subfamily. As to quaternary structure, homopentamer. Requires NADP(+) as cofactor.

It carries out the reaction ADP-D-glycero-beta-D-manno-heptose = ADP-L-glycero-beta-D-manno-heptose. Its pathway is nucleotide-sugar biosynthesis; ADP-L-glycero-beta-D-manno-heptose biosynthesis; ADP-L-glycero-beta-D-manno-heptose from D-glycero-beta-D-manno-heptose 7-phosphate: step 4/4. Catalyzes the interconversion between ADP-D-glycero-beta-D-manno-heptose and ADP-L-glycero-beta-D-manno-heptose via an epimerization at carbon 6 of the heptose. The protein is ADP-L-glycero-D-manno-heptose-6-epimerase of Vibrio cholerae serotype O1 (strain ATCC 39541 / Classical Ogawa 395 / O395).